A 247-amino-acid chain; its full sequence is UPF0259 membrane protein BUAP5A_271 (247 aa).

A run of 6 helical transmembrane segments spans residues 20 to 40 (IGAIFFISIFATFMNILIDMF), 85 to 105 (IMESLISKTTLLGSIIILISV), 114 to 134 (IVSSIRTFFLFFPSLFILNFL), 137 to 157 (FIIQIGFMLLIIPGILLSIIL), 188 to 208 (IIGPGVLFWMCGKFILTMLLA), and 218 to 238 (LFLISNISMNILFSILIIYLF).

The protein belongs to the UPF0259 family.

The protein resides in the cell membrane. The protein is UPF0259 membrane protein BUAP5A_271 of Buchnera aphidicola subsp. Acyrthosiphon pisum (strain 5A).